The chain runs to 468 residues: GTPase Der (468 aa).

EngA-type G domains are found at residues Pro3–Glu167 and Pro179–Met352. GTP contacts are provided by residues Gly9–Ser16, Asp56–Phe60, Asn119–Glu122, Gly185–Ser192, Asp232–Leu236, and Asn297–Asp300. Residues Ala353–His437 form the KH-like domain. Positions Arg434–Gly468 are disordered. A compositionally biased stretch (basic residues) spans Ala456–Gly468.

This sequence belongs to the TRAFAC class TrmE-Era-EngA-EngB-Septin-like GTPase superfamily. EngA (Der) GTPase family. As to quaternary structure, associates with the 50S ribosomal subunit.

In terms of biological role, GTPase that plays an essential role in the late steps of ribosome biogenesis. The polypeptide is GTPase Der (Nitrosomonas eutropha (strain DSM 101675 / C91 / Nm57)).